The primary structure comprises 234 residues: MELVYEGKAKRVYKHGDFYIMEFKDEVTAGDGAVKAQAPGKGALTAELSALLFKYLSRVVETHFVEYKPPNALAVIPAEVIPVEVIVRFKAYGSQLRRMPRLRELQHLSRPLVEFHYKDDALHDPLVYPQEVVEAGLAAPQEVEAIEEMAVRAASALRDLYARAGCDFIDVKFEFGRRGGRLILVDEVSGDTFRLLCRGEHLDKEYFRKTKDVNGLIERYRDLLQITKETFTRI.

It belongs to the SAICAR synthetase family.

It carries out the reaction 5-amino-1-(5-phospho-D-ribosyl)imidazole-4-carboxylate + L-aspartate + ATP = (2S)-2-[5-amino-1-(5-phospho-beta-D-ribosyl)imidazole-4-carboxamido]succinate + ADP + phosphate + 2 H(+). It participates in purine metabolism; IMP biosynthesis via de novo pathway; 5-amino-1-(5-phospho-D-ribosyl)imidazole-4-carboxamide from 5-amino-1-(5-phospho-D-ribosyl)imidazole-4-carboxylate: step 1/2. The sequence is that of Phosphoribosylaminoimidazole-succinocarboxamide synthase from Pyrobaculum aerophilum (strain ATCC 51768 / DSM 7523 / JCM 9630 / CIP 104966 / NBRC 100827 / IM2).